The sequence spans 165 residues: Fatty acid-binding protein homolog 3 (165 aa).

The N-terminal stretch at 1 to 19 (MNLYLTLFSFCFLAIMAEA) is a signal peptide.

The protein belongs to the calycin superfamily. Fatty-acid binding protein (FABP) family. As to expression, expressed in presumptive hypodermal cells by the comma stage and in posterior body wall muscle cells by the two-fold stage. From L1 to adult stages, expression continues in body wall muscle cells adjacent to the pseudocoelom, while hypodermal expression is extinguished.

It is found in the secreted. Functionally, may play a role in sequestering potentially toxic fatty acids and their peroxidation products, or it may be involved in the maintenance of the impermeable lipid layer of the eggshell. The polypeptide is Fatty acid-binding protein homolog 3 (lbp-3) (Caenorhabditis elegans).